Consider the following 196-residue polypeptide: DNA polymerase epsilon subunit D (196 aa).

A disordered region spans residues 125-196 (RKKEKLDSGE…ETRVQNLEQT (72 aa)). Residues 133–143 (GEVDADGDIDM) show a composition bias toward acidic residues. Residues 144 to 159 (GEDKENVPVEKVKEHD) are compositionally biased toward basic and acidic residues. Residues 160 to 173 (EIEEQGDALQDVEE) are compositionally biased toward acidic residues. Positions 174 to 188 (SSEKKQKTESQDVET) are enriched in basic and acidic residues. The residue at position 183 (serine 183) is a Phosphoserine; by ATM or ATR.

In terms of assembly, DNA polymerase epsilon is a heterotetramer consisting of POL2, DPB2, DPB3 and DPB4. Component of the ISW2 complex, which at least consists of ISW2, ITC1, DLS1 and DPB4.

The protein localises to the nucleus. In terms of biological role, as accessory component of the DNA polymerase epsilon (DNA polymerase II) participates in chromosomal DNA replication. It is required during synthesis of the leading and lagging DNA strands at the replication fork and binds at/or near replication origins and moves along DNA with the replication fork. It has 3'-5' proofreading exonuclease activity that correct errors arising during DNA replication. It is also involved in DNA synthesis during DNA repair. Also functions as a component of the ISW2 complex, which acts in remodeling the chromatin by catalyzing an ATP-dependent alteration in the structure of nucleosomal DNA. The ISW2 complex is involved in coordinating transcriptional repression and in inheritance of telomeric silencing. It is involved in repression of MAT a-specific genes, INO1, and early meiotic genes during mitotic growth dependent upon transcription factor UME6 and in a parallel pathway to the RPD3-SIN3 histone deacetylase complex. This is DNA polymerase epsilon subunit D (DPB4) from Saccharomyces cerevisiae (strain ATCC 204508 / S288c) (Baker's yeast).